Consider the following 355-residue polypeptide: GTPase Obg (355 aa).

An Obg domain is found at 1–159 (MKLVDEAEIL…RLLKLELKLL (159 aa)). Residues 160–342 (ADVGLLGFPN…IMKDVMAFFD (183 aa)) form the OBG-type G domain. GTP-binding positions include 166–173 (GFPNAGKS), 191–195 (FTTLY), 213–216 (DVPG), 292–295 (NKAD), and 323–325 (SAL). Residues serine 173 and threonine 193 each contribute to the Mg(2+) site.

Belongs to the TRAFAC class OBG-HflX-like GTPase superfamily. OBG GTPase family. As to quaternary structure, monomer. It depends on Mg(2+) as a cofactor.

It is found in the cytoplasm. In terms of biological role, an essential GTPase which binds GTP, GDP and possibly (p)ppGpp with moderate affinity, with high nucleotide exchange rates and a fairly low GTP hydrolysis rate. Plays a role in control of the cell cycle, stress response, ribosome biogenesis and in those bacteria that undergo differentiation, in morphogenesis control. The chain is GTPase Obg from Xanthomonas euvesicatoria pv. vesicatoria (strain 85-10) (Xanthomonas campestris pv. vesicatoria).